We begin with the raw amino-acid sequence, 816 residues long: Nicotine 6-hydroxylase large subunit (816 aa).

Position 745 (E745) interacts with Mo-molybdopterin cytosine dinucleotide.

This sequence belongs to the xanthine dehydrogenase family. In terms of assembly, heterotrimer composed of a large subunit (NdhL), a medium subunit (NdhM) and a small subunit (NdhS). Requires Mo-molybdopterin cytosine dinucleotide as cofactor.

Its subcellular location is the cytoplasm. It carries out the reaction (R)-nicotine + A + H2O = (R)-6-hydroxynicotine + AH2. It catalyses the reaction (S)-nicotine + A + H2O = (S)-6-hydroxynicotine + AH2. It functions in the pathway alkaloid degradation; nicotine degradation; 6-hydroxypseudooxynicotine from nicotine (R-isomer route): step 1/2. It participates in alkaloid degradation; nicotine degradation; 6-hydroxypseudooxynicotine from nicotine (S-isomer route): step 1/2. With respect to regulation, nicotine dehydrogenase activity is inhibited by tungsten. In terms of biological role, component of the nicotine 6-hydroxylase, which is involved in the degradation of nicotine. Catalyzes the hydroxylation of the pyridine ring at C6 to form 6-hydroxynicotine. Can use both L-nicotine and D-nicotine. The polypeptide is Nicotine 6-hydroxylase large subunit (Paenarthrobacter nicotinovorans (Arthrobacter nicotinovorans)).